Consider the following 102-residue polypeptide: Protein ORF28 (102 aa).

A helical membrane pass occupies residues 28–48; it reads VIGLITVLFLLVIGACVYCCI.

The protein localises to the host membrane. The sequence is that of Protein ORF28 (ORF28) from Homo sapiens (Human).